Consider the following 72-residue polypeptide: Translation initiation factor IF-1 (72 aa).

An S1-like domain is found at 1 to 72 (MSKDDSIEFE…TKGRITYRMK (72 aa)).

It belongs to the IF-1 family. As to quaternary structure, component of the 30S ribosomal translation pre-initiation complex which assembles on the 30S ribosome in the order IF-2 and IF-3, IF-1 and N-formylmethionyl-tRNA(fMet); mRNA recruitment can occur at any time during PIC assembly.

The protein localises to the cytoplasm. Its function is as follows. One of the essential components for the initiation of protein synthesis. Stabilizes the binding of IF-2 and IF-3 on the 30S subunit to which N-formylmethionyl-tRNA(fMet) subsequently binds. Helps modulate mRNA selection, yielding the 30S pre-initiation complex (PIC). Upon addition of the 50S ribosomal subunit IF-1, IF-2 and IF-3 are released leaving the mature 70S translation initiation complex. The protein is Translation initiation factor IF-1 of Xanthomonas euvesicatoria pv. vesicatoria (strain 85-10) (Xanthomonas campestris pv. vesicatoria).